A 297-amino-acid chain; its full sequence is 4-hydroxy-tetrahydrodipicolinate synthase (297 aa).

Residue Thr47 coordinates pyruvate. The Proton donor/acceptor role is filled by Tyr135. The active-site Schiff-base intermediate with substrate is Lys163. Residue Ile205 participates in pyruvate binding.

Belongs to the DapA family. As to quaternary structure, homotetramer; dimer of dimers.

The protein localises to the cytoplasm. It carries out the reaction L-aspartate 4-semialdehyde + pyruvate = (2S,4S)-4-hydroxy-2,3,4,5-tetrahydrodipicolinate + H2O + H(+). Its pathway is amino-acid biosynthesis; L-lysine biosynthesis via DAP pathway; (S)-tetrahydrodipicolinate from L-aspartate: step 3/4. In terms of biological role, catalyzes the condensation of (S)-aspartate-beta-semialdehyde [(S)-ASA] and pyruvate to 4-hydroxy-tetrahydrodipicolinate (HTPA). This is 4-hydroxy-tetrahydrodipicolinate synthase from Dehalococcoides mccartyi (strain CBDB1).